The sequence spans 496 residues: RNA-binding motif protein, Y chromosome, family 1 member F/J (496 aa).

The 78-residue stretch at 8–85 (GKLFIGGLNR…KAIKVEQAKK (78 aa)) folds into the RRM domain. Disordered regions lie at residues 81–345 (EQAK…YAPP) and 452–496 (KDQR…SSRY). Low complexity-rich tracts occupy residues 97–114 (PASS…SARG) and 149–159 (PVKRGPSSRSG). The segment covering 175–184 (NSWMGSQGPM) has biased composition (polar residues). 6 stretches are compositionally biased toward basic and acidic residues: residues 204–214 (RNDRMSTRHDG), 242–253 (DNGHSNRDEHSS), 276–289 (AYRD…DESY), 313–326 (GYRD…HESY), 335–345 (SSRETRDYAPP), and 484–496 (GESR…SSRY).

Interacts with splicing factor proteins SFRS3/SRP20, TRA2B/SFRS10, KHDRBS1/SAM68 and KHDRBS3. Testis-specific.

The protein localises to the nucleus. RNA-binding protein which may be involved in spermatogenesis. Required for sperm development, possibly by participating in pre-mRNA splicing in the testis. The protein is RNA-binding motif protein, Y chromosome, family 1 member F/J (RBMY1F) of Homo sapiens (Human).